A 70-amino-acid chain; its full sequence is Basic phospholipase A2 2 (70 aa).

Cys-28 and Cys-44 are joined by a disulfide. The active site involves His-47. Asp-48 is a Ca(2+) binding site.

The protein belongs to the phospholipase A2 family. Group II subfamily. D49 sub-subfamily. It depends on Ca(2+) as a cofactor. In terms of tissue distribution, expressed by the venom gland.

Its subcellular location is the secreted. The enzyme catalyses a 1,2-diacyl-sn-glycero-3-phosphocholine + H2O = a 1-acyl-sn-glycero-3-phosphocholine + a fatty acid + H(+). Snake venom phospholipase A2 (PLA2) that exhibits strong myotoxicity. PLA2 catalyzes the calcium-dependent hydrolysis of the 2-acyl groups in 3-sn-phosphoglycerides. The polypeptide is Basic phospholipase A2 2 (Trimeresurus stejnegeri (Chinese green tree viper)).